We begin with the raw amino-acid sequence, 256 residues long: Ethylene-responsive transcription factor ERF084 (256 aa).

A DNA-binding region (AP2/ERF) is located at residues G115–V172.

This sequence belongs to the AP2/ERF transcription factor family. ERF subfamily.

Its subcellular location is the nucleus. Probably acts as a transcriptional activator. Binds to the GCC-box pathogenesis-related promoter element. May be involved in the regulation of gene expression by stress factors and by components of stress signal transduction pathways. This is Ethylene-responsive transcription factor ERF084 (ERF084) from Arabidopsis thaliana (Mouse-ear cress).